We begin with the raw amino-acid sequence, 633 residues long: Probable potassium transport system protein Kup (633 aa).

12 consecutive transmembrane segments (helical) span residues 19-39, 61-81, 112-132, 148-168, 179-199, 217-237, 258-278, 290-310, 348-368, 380-400, 405-425, and 430-450; these read LGML…SPLY, ILAL…VLFI, VLVI…MITP, SGLE…LFLI, LFGP…INGI, FFIV…LALT, WFAL…ALLL, LLAP…ATVI, IYIG…VLGF, VAVT…MLLL, PVLA…FFAA, and IFQG…LMTT.

Belongs to the HAK/KUP transporter (TC 2.A.72) family.

The protein resides in the cell inner membrane. The enzyme catalyses K(+)(in) + H(+)(in) = K(+)(out) + H(+)(out). In terms of biological role, transport of potassium into the cell. Likely operates as a K(+):H(+) symporter. This Pseudomonas fluorescens (strain ATCC BAA-477 / NRRL B-23932 / Pf-5) protein is Probable potassium transport system protein Kup.